We begin with the raw amino-acid sequence, 384 residues long: 23S rRNA (uracil(747)-C(5))-methyltransferase RlmC (384 aa).

[4Fe-4S] cluster-binding residues include C7, C15, C18, and C94. The S-adenosyl-L-methionine site is built by Q219, F248, E269, and N316. The Nucleophile role is filled by C343.

The protein belongs to the class I-like SAM-binding methyltransferase superfamily. RNA M5U methyltransferase family. RlmC subfamily.

The catalysed reaction is uridine(747) in 23S rRNA + S-adenosyl-L-methionine = 5-methyluridine(747) in 23S rRNA + S-adenosyl-L-homocysteine + H(+). In terms of biological role, catalyzes the formation of 5-methyl-uridine at position 747 (m5U747) in 23S rRNA. The protein is 23S rRNA (uracil(747)-C(5))-methyltransferase RlmC of Shewanella sp. (strain MR-7).